A 207-amino-acid chain; its full sequence is dTTP/UTP pyrophosphatase (207 aa).

Aspartate 79 (proton acceptor) is an active-site residue.

Belongs to the Maf family. YhdE subfamily. Requires a divalent metal cation as cofactor.

The protein resides in the cytoplasm. The catalysed reaction is dTTP + H2O = dTMP + diphosphate + H(+). It carries out the reaction UTP + H2O = UMP + diphosphate + H(+). Its function is as follows. Nucleoside triphosphate pyrophosphatase that hydrolyzes dTTP and UTP. May have a dual role in cell division arrest and in preventing the incorporation of modified nucleotides into cellular nucleic acids. This is dTTP/UTP pyrophosphatase from Rhodopseudomonas palustris (strain HaA2).